Here is a 297-residue protein sequence, read N- to C-terminus: MLWELYVFVFAASVFLNFVGIIANLFIIVIIIKTWVNSRRIASPDRILFSLAITRFLTLGLFLLNSVYIATNTGRSVYFSTFFLLCWKFLDANSLWLVTILNSLYCVKITNFQHPVFLLLKRTISMKTTSLLLACLLISALTTLLYYMLSQISRFPEHIIGRNDTSFDLSDGILTLVASLVLNSLLQFMLNVTFASLLIHSLRRHIQKMQRNRTSFWNPQTEAHMGAMRLMICFLVLYIPYSIATLLYLPSYMRKNLRAQAICMIITAAYPPGHSVLLIITHHKLKAKAKKIFCFYK.

Residues 1 to 11 (MLWELYVFVFA) lie on the Extracellular side of the membrane. Residues 12–32 (ASVFLNFVGIIANLFIIVIII) form a helical membrane-spanning segment. The Cytoplasmic segment spans residues 33-46 (KTWVNSRRIASPDR). A helical membrane pass occupies residues 47-67 (ILFSLAITRFLTLGLFLLNSV). Residues 68 to 80 (YIATNTGRSVYFS) lie on the Extracellular side of the membrane. The chain crosses the membrane as a helical span at residues 81-101 (TFFLLCWKFLDANSLWLVTIL). Residues 102–128 (NSLYCVKITNFQHPVFLLLKRTISMKT) lie on the Cytoplasmic side of the membrane. Residues 129-149 (TSLLLACLLISALTTLLYYML) traverse the membrane as a helical segment. The Extracellular segment spans residues 150 to 171 (SQISRFPEHIIGRNDTSFDLSD). An N-linked (GlcNAc...) asparagine glycan is attached at N163. The helical transmembrane segment at 172 to 192 (GILTLVASLVLNSLLQFMLNV) threads the bilayer. Residues 193-229 (TFASLLIHSLRRHIQKMQRNRTSFWNPQTEAHMGAMR) lie on the Cytoplasmic side of the membrane. A helical membrane pass occupies residues 230-250 (LMICFLVLYIPYSIATLLYLP). The Extracellular portion of the chain corresponds to 251–260 (SYMRKNLRAQ). The chain crosses the membrane as a helical span at residues 261–281 (AICMIITAAYPPGHSVLLIIT). Topologically, residues 282-297 (HHKLKAKAKKIFCFYK) are cytoplasmic.

The protein belongs to the G-protein coupled receptor T2R family. Expressed in subsets of taste receptor cells of the tongue and palate epithelium and exclusively in gustducin-positive cells. Expressed in 15% taste bud cells in circumvallate and foliate papillae but only in 2% in fungiform papillae.

Its subcellular location is the membrane. It localises to the cell projection. It is found in the cilium membrane. Functionally, gustducin-coupled receptor for denatonium and N(6)-propyl-2-thiouracil implicated in the perception of bitter compounds in the oral cavity and the gastrointestinal tract. Signals through PLCB2 and the calcium-regulated cation channel TRPM5. In airway epithelial cells, binding of denatonium increases the intracellular calcium ion concentration and stimulates ciliary beat frequency. The sequence is that of Taste receptor type 2 member 4 (Tas2r4) from Mus musculus (Mouse).